The chain runs to 879 residues: MPTEANTYDPQRIESTAQHYWDSTHAFEVNEHSNKPKYYCLSMLPYPSGALHMGHVRNYTIGDVISRYKRMTGHNVLQPMGWDAFGLPAENAAIKNKVAPAQWTYKNIERMRTQLKSLGYAIDWSREFATCQPDYYVHEQHMFTRLMRKGLAYRRNALVNWDPVDQTVLANEQVIDGRGWRSGAPVEKREIPQWFLRITDYAQELLDGLNTLDDWPEPVKTMQRNWIGRSEGLEIQFEVRDADNNALEALRVFTTRPDTLLGVTFVSIAAEHPLALHAAKSNPALAGLLTEMKQGGLSEAELKTQEKRGMDTGLKAIHPITNEQLPVWVANFVLMAYGTGAVMAVPGHDQRDQEFANKYGLPIRQVIALKEPKNQDESTWEPDVWRDWYADKTREFELINSAEFDGLDYQDAFEVLAERFERQGRGQRRVNYRLRDWGVSRQRYWGCPIPVIYCPTCGAVPVPEDQLPVILPENVAFSGTGSPIKTDPEWRKTTCPECGGPAERETDTFDTFMESSWYYARYTSPNAHEMLDKRANYWLPVDQYIGGIEHAILHLMYFRFYHKLMRDARLVDSDEPAINLLTQGMVIAETFYRKNPDGSKDWINPADVNVECDERGRITGATLISDGQPVLIGATEKMSKSKNNGVDPQIMVTKYGADTVRLFSMFAAPPEQSLEWNEAGVEGMARFLRRLWTQVHHHAAHGPATALDITALDTAQKAMRCKTHNTIARVEDDYGRRRSFNTAIAAVMELSNTLARFDDTTTQSHAVRQEALETMVLLLNPITPHTSHALWQTLGHPETLLEDLPFPKIDTTALVRETTTLAVQVNGKLRGTIEVATDAPREHIENNARTEPNTARFLEGLTVLKIIIVPGKIVNIVAR.

The short motif at 45–55 (PYPSGALHMGH) is the 'HIGH' region element. A 'KMSKS' region motif is present at residues 637-641 (KMSKS). Lys640 is an ATP binding site.

This sequence belongs to the class-I aminoacyl-tRNA synthetase family.

The protein resides in the cytoplasm. It carries out the reaction tRNA(Leu) + L-leucine + ATP = L-leucyl-tRNA(Leu) + AMP + diphosphate. The chain is Leucine--tRNA ligase from Xylella fastidiosa (strain 9a5c).